A 403-amino-acid polypeptide reads, in one-letter code: Phosphoglycerate kinase (403 aa).

Residues 24–26 (DLN), Arg-39, 62–65 (HLGR), Arg-121, and Arg-161 each bind substrate. ATP-binding positions include Lys-211, Gly-299, Glu-330, and 359–362 (GGDS).

The protein belongs to the phosphoglycerate kinase family. Monomer.

It is found in the cytoplasm. The enzyme catalyses (2R)-3-phosphoglycerate + ATP = (2R)-3-phospho-glyceroyl phosphate + ADP. The protein operates within carbohydrate degradation; glycolysis; pyruvate from D-glyceraldehyde 3-phosphate: step 2/5. This Rhodococcus erythropolis (strain PR4 / NBRC 100887) protein is Phosphoglycerate kinase.